We begin with the raw amino-acid sequence, 928 residues long: G-protein coupled receptor family C group 6 member A (928 aa).

The first 20 residues, 1 to 20 (MALSFVFITCFMILLDTSQS), serve as a signal peptide directing secretion. Residues 21–594 (CHTPDDFVAI…EYLDWDDSLA (574 aa)) are Extracellular-facing. 2 N-linked (GlcNAc...) asparagine glycosylation sites follow: Asn-332 and Asn-555. A helical transmembrane segment spans residues 595–615 (LLLIALSLLGIAFVLAVGIIF). The Cytoplasmic segment spans residues 616-630 (TRNLKTPVVKSSGGL). The chain crosses the membrane as a helical span at residues 631–651 (VVCYVMLACHALNFASTGFFI). Residues 652–669 (GEPQDFTCKTRQTLFGVS) lie on the Extracellular side of the membrane. Residues 670-690 (FTLCVSCILTKSLKILLAFSF) form a helical membrane-spanning segment. Residues 691–706 (DPTLKTFLKCLYRPVP) are Cytoplasmic-facing. The chain crosses the membrane as a helical span at residues 707-727 (IVLTCTGIQVVICTLWLVLAA). The Extracellular portion of the chain corresponds to 728–750 (PTVEENTSLPRVIILECEEGSAL). Residues 751-771 (AFGTMLGYIAVLAFICFVFAF) traverse the membrane as a helical segment. The Cytoplasmic portion of the chain corresponds to 772 to 784 (KGRKLPENYNEAK). A helical transmembrane segment spans residues 785–805 (FLTFGMLIYFIAWITFIPVYA). Topologically, residues 806 to 812 (TTFGKYL) are extracellular. Residues 813 to 833 (PAVEIIVILISNYGILCCTFF) traverse the membrane as a helical segment. The Cytoplasmic segment spans residues 834 to 928 (PKCYIILCKQ…TLHQKRSSSI (95 aa)).

This sequence belongs to the G-protein coupled receptor 3 family. Homodimer; disulfide-linked. Post-translationally, N-glycosylated. In terms of tissue distribution, high expression in soft palate. Weak expression in kidney, liver, lung and brain. No expression detected in heart, testis, skeletal muscle amd spleen.

The protein localises to the cell membrane. Its function is as follows. Receptor activated by multiple ligands, including osteocalcin (BGLAP), basic amino acids, and various cations. Activated by amino acids with a preference for basic amino acids such as L-Lys, L-Arg and L-ornithine but also by small and polar amino acids. The L-alpha amino acids respond is augmented by divalent cations Ca(2+) and Mg(2+). Seems to act through a G(q)/G(11) and G(i)-coupled pathway. Regulates testosterone production by acting as a ligand for uncarboxylated osteocalcin hormone: osteocalcin-binding at the surface of Leydig cells initiates a signaling response that promotes the expression of enzymes required for testosterone synthesis in a CREB-dependent manner. Mediates the non-genomic effects of androgens in multiple tissue. May coordinate nutritional and hormonal anabolic signals through the sensing of extracellular amino acids, osteocalcin, divalent ions and its responsiveness to anabolic steroids. This is G-protein coupled receptor family C group 6 member A (Gprc6a) from Rattus norvegicus (Rat).